Here is a 668-residue protein sequence, read N- to C-terminus: Acyl-CoA-binding domain-containing protein 4 (668 aa).

The ACB domain maps to 12 to 106 (YPERFYAAAS…LEEDDPGWYS (95 aa)). An acyl-CoA is bound by residues Lys33, 48–52 (YALYQ), and Lys74. Kelch repeat units lie at residues 195-242 (KMYI…TLLA), 255-305 (KLLS…MVGK), 307-356 (LVIF…VHAE), 358-407 (FLLI…TIGE), 408-456 (NWFI…LVVS), and 463-508 (VLVA…VNNA). Residues Ser515 and Ser520 each carry the phosphoserine modification. A coiled-coil region spans residues 538–647 (KVEGNSERII…EQAAMNAKRQ (110 aa)). The disordered stretch occupies residues 639–668 (QAAMNAKRQGSGGVWGWLAGSPQEKDDDSP).

This sequence belongs to the ACBP family. As to quaternary structure, interacts with RAP2-3/EBP, an ethylene-responsive element binding protein. Mostly expressed in roots, stems, and leaves, and, to a lower extent, in flowers and siliques.

The protein localises to the cytoplasm. Binds medium- and long-chain acyl-CoA esters with very high affinity. Can interact in vitro with oleoyl-CoA, barely with palmitoyl-CoA, but not with arachidonyl-CoA. May function as an intracellular carrier of acyl-CoA esters. Plays a role in the biosynthesis of membrane lipids including galactolipids and phospholipids. The chain is Acyl-CoA-binding domain-containing protein 4 (ACBP4) from Arabidopsis thaliana (Mouse-ear cress).